We begin with the raw amino-acid sequence, 264 residues long: S-adenosylmethionine decarboxylase proenzyme (264 aa).

The active-site Schiff-base intermediate with substrate; via pyruvic acid is S113. The residue at position 113 (S113) is a Pyruvic acid (Ser); by autocatalysis. Catalysis depends on H118, which acts as the Proton acceptor; for processing activity. Residue C141 is the Proton donor; for catalytic activity of the active site.

This sequence belongs to the prokaryotic AdoMetDC family. Type 2 subfamily. In terms of assembly, heterooctamer of four alpha and four beta chains arranged as a tetramer of alpha/beta heterodimers. It depends on pyruvate as a cofactor. Post-translationally, is synthesized initially as an inactive proenzyme. Formation of the active enzyme involves a self-maturation process in which the active site pyruvoyl group is generated from an internal serine residue via an autocatalytic post-translational modification. Two non-identical subunits are generated from the proenzyme in this reaction, and the pyruvate is formed at the N-terminus of the alpha chain, which is derived from the carboxyl end of the proenzyme. The post-translation cleavage follows an unusual pathway, termed non-hydrolytic serinolysis, in which the side chain hydroxyl group of the serine supplies its oxygen atom to form the C-terminus of the beta chain, while the remainder of the serine residue undergoes an oxidative deamination to produce ammonia and the pyruvoyl group blocking the N-terminus of the alpha chain.

It carries out the reaction S-adenosyl-L-methionine + H(+) = S-adenosyl 3-(methylsulfanyl)propylamine + CO2. It functions in the pathway amine and polyamine biosynthesis; S-adenosylmethioninamine biosynthesis; S-adenosylmethioninamine from S-adenosyl-L-methionine: step 1/1. Its function is as follows. Catalyzes the decarboxylation of S-adenosylmethionine to S-adenosylmethioninamine (dcAdoMet), the propylamine donor required for the synthesis of the polyamines spermine and spermidine from the diamine putrescine. The sequence is that of S-adenosylmethionine decarboxylase proenzyme from Xanthomonas euvesicatoria pv. vesicatoria (strain 85-10) (Xanthomonas campestris pv. vesicatoria).